The chain runs to 209 residues: Uracil phosphoribosyltransferase (209 aa).

Residues arginine 79, arginine 104, and 131-139 contribute to the 5-phospho-alpha-D-ribose 1-diphosphate site; that span reads TPVVATANT. Uracil is bound by residues isoleucine 194 and 199-201; that span reads GDA. Aspartate 200 is a 5-phospho-alpha-D-ribose 1-diphosphate binding site.

The protein belongs to the UPRTase family. Requires Mg(2+) as cofactor.

It catalyses the reaction UMP + diphosphate = 5-phospho-alpha-D-ribose 1-diphosphate + uracil. It participates in pyrimidine metabolism; UMP biosynthesis via salvage pathway; UMP from uracil: step 1/1. With respect to regulation, allosterically activated by GTP. Its function is as follows. Catalyzes the conversion of uracil and 5-phospho-alpha-D-ribose 1-diphosphate (PRPP) to UMP and diphosphate. The protein is Uracil phosphoribosyltransferase of Bradyrhizobium diazoefficiens (strain JCM 10833 / BCRC 13528 / IAM 13628 / NBRC 14792 / USDA 110).